The chain runs to 449 residues: MEKVWLEAQSNIKKVLTPQTYNTWIKPIRFHTLTDDNLTLEVPSKFIKEWVTEKYLPMIVEAISSLTSVKYQIEFKITEKIPLESKPVDNFTPVIKDNEPSKETNKNIDITANLNPKYTFDSFVCGASNQFAHAASQAVASNPASNYNPLFIYGGVGLGKTHLLIAIGNHIKENNKKAKICYYSSEKFMNEMINCLRYKKMDEFRNKFRKMDILLIDDIQFMAGKEATQEEFFHTFNALYESHKQIVVTSDKFPKDIPGLEERLRSRFEWGLIADIQPPDIETKIAILKKKSDLNSITLPNDVALFLASSATSNVRELEGMLIRLGAYASLTGSEITLNMARDILKDIIVEKTKDITVEMIQKHVAEHFKIKVSELKSDKRLKTFVVPRQIAIFICRELTKSSYPEIGEKFGGKDHSTIIHSVKKIEKQMANDLEIKNIVENLKKELIT.

The interval 1-69 (MEKVWLEAQS…VEAISSLTSV (69 aa)) is domain I, interacts with DnaA modulators. A domain II region spans residues 69–112 (VKYQIEFKITEKIPLESKPVDNFTPVIKDNEPSKETNKNIDITA). The interval 113 to 329 (NLNPKYTFDS…GMLIRLGAYA (217 aa)) is domain III, AAA+ region. The ATP site is built by Gly-157, Gly-159, Lys-160, and Thr-161. The domain IV, binds dsDNA stretch occupies residues 330–449 (SLTGSEITLN…VENLKKELIT (120 aa)).

Belongs to the DnaA family. In terms of assembly, oligomerizes as a right-handed, spiral filament on DNA at oriC.

Its subcellular location is the cytoplasm. In terms of biological role, plays an essential role in the initiation and regulation of chromosomal replication. ATP-DnaA binds to the origin of replication (oriC) to initiate formation of the DNA replication initiation complex once per cell cycle. Binds the DnaA box (a 9 base pair repeat at the origin) and separates the double-stranded (ds)DNA. Forms a right-handed helical filament on oriC DNA; dsDNA binds to the exterior of the filament while single-stranded (ss)DNA is stabiized in the filament's interior. The ATP-DnaA-oriC complex binds and stabilizes one strand of the AT-rich DNA unwinding element (DUE), permitting loading of DNA polymerase. After initiation quickly degrades to an ADP-DnaA complex that is not apt for DNA replication. Binds acidic phospholipids. This chain is Chromosomal replication initiator protein DnaA, found in Geotalea uraniireducens (strain Rf4) (Geobacter uraniireducens).